We begin with the raw amino-acid sequence, 330 residues long: Mycothiol acetyltransferase (330 aa).

N-acetyltransferase domains lie at 5-142 and 171-328; these read LVTD…MPLR and VRLR…APRP. Glu-36 lines the 1D-myo-inositol 2-(L-cysteinylamino)-2-deoxy-alpha-D-glucopyranoside pocket. 80–82 contacts acetyl-CoA; that stretch reads VVV. The disordered stretch occupies residues 142 to 161; the sequence is RDIAGDEPGGPWEAPELPEP. The 1D-myo-inositol 2-(L-cysteinylamino)-2-deoxy-alpha-D-glucopyranoside site is built by Glu-198, Lys-238, and Glu-254. Residues 258–260 and 265–271 contribute to the acetyl-CoA site; these read VGV and QGSGLGR. Tyr-292 is a binding site for 1D-myo-inositol 2-(L-cysteinylamino)-2-deoxy-alpha-D-glucopyranoside. Acetyl-CoA is bound at residue 297 to 302; sequence NEAAVR.

This sequence belongs to the acetyltransferase family. MshD subfamily. As to quaternary structure, monomer.

It catalyses the reaction 1D-myo-inositol 2-(L-cysteinylamino)-2-deoxy-alpha-D-glucopyranoside + acetyl-CoA = mycothiol + CoA + H(+). Functionally, catalyzes the transfer of acetyl from acetyl-CoA to desacetylmycothiol (Cys-GlcN-Ins) to form mycothiol. The protein is Mycothiol acetyltransferase of Nocardiopsis dassonvillei (strain ATCC 23218 / DSM 43111 / CIP 107115 / JCM 7437 / KCTC 9190 / NBRC 14626 / NCTC 10488 / NRRL B-5397 / IMRU 509) (Actinomadura dassonvillei).